A 524-amino-acid chain; its full sequence is Secologanin synthase 1 (524 aa).

The Lumenal portion of the chain corresponds to 1–11; sequence MEMDMDTIRKA. A helical transmembrane segment spans residues 12–32; it reads IAATIFALVMAWAWRVLDWAW. At 33-524 the chain is on the cytoplasmic side; sequence FTPKRIEKRL…SHVIYKKLES (492 aa). Position 470 (cysteine 470) interacts with heme.

The protein belongs to the cytochrome P450 family. Heme is required as a cofactor. Upper and lower leaf epidermis.

It localises to the endoplasmic reticulum membrane. It catalyses the reaction loganin + reduced [NADPH--hemoprotein reductase] + O2 = secologanin + oxidized [NADPH--hemoprotein reductase] + 2 H2O + H(+). The catalysed reaction is secologanin + reduced [NADPH--hemoprotein reductase] + O2 = secoxyloganin + oxidized [NADPH--hemoprotein reductase] + H2O + 2 H(+). It functions in the pathway alkaloid biosynthesis; secologanin biosynthesis. Its function is as follows. Component of the seco-iridoid and derivatives monoterpenoid indole alkaloids (MIAs, e.g. secologanin) biosynthesis pathway. Catalyzes the conversion of loganin into secologanin. Catalyzes the conversion of secologanin into secoxyloganin. This is Secologanin synthase 1 from Catharanthus roseus (Madagascar periwinkle).